The sequence spans 589 residues: Putative ABC transporter ATP-binding protein MG015 (589 aa).

The next 6 helical transmembrane spans lie at Leu-9 to Leu-29, Leu-66 to Ala-86, Leu-161 to Ile-181, Ile-251 to Ile-271, Ile-280 to Leu-300, and Ile-303 to Ser-323. The region spanning Leu-9–Leu-319 is the ABC transmembrane type-1 domain. The region spanning Ile-352–Ser-586 is the ABC transporter domain. Residue Gly-385–Ser-392 coordinates ATP.

The protein belongs to the ABC transporter superfamily.

Its subcellular location is the cell membrane. The sequence is that of Putative ABC transporter ATP-binding protein MG015 from Mycoplasma genitalium (strain ATCC 33530 / DSM 19775 / NCTC 10195 / G37) (Mycoplasmoides genitalium).